The primary structure comprises 380 residues: tRNA(Met) cytidine acetate ligase (380 aa).

ATP contacts are provided by residues 7 to 20, Gly100, Asn153, and Arg178; that span reads ITEYNPFHNGHLYH.

The protein belongs to the TmcAL family.

Its subcellular location is the cytoplasm. It carries out the reaction cytidine(34) in elongator tRNA(Met) + acetate + ATP = N(4)-acetylcytidine(34) in elongator tRNA(Met) + AMP + diphosphate. In terms of biological role, catalyzes the formation of N(4)-acetylcytidine (ac(4)C) at the wobble position of elongator tRNA(Met), using acetate and ATP as substrates. First activates an acetate ion to form acetyladenylate (Ac-AMP) and then transfers the acetyl group to tRNA to form ac(4)C34. This is tRNA(Met) cytidine acetate ligase from Staphylococcus haemolyticus (strain JCSC1435).